The chain runs to 369 residues: MTQNTAIPMVDLRAHFAPLRDEILTGIGKILDDASFILGNQGRALEAEVAGLSGVAHGVGCASGTDALMLALRALEIGPGDEVIVPTFTFIATAEAVLYVGATPVFVDVDDRFYAMTIAGIEAAITPRTKAIIPVHLYGLPADMPGIMALAQKHGLRVIEDCAQAIGAQINGQGVGSFGDIGCFSFFPSKNLGAAGDGGMVVTADAELERKLRGLRNHGSWQTYHHDVLGYNSRLDEMQAVILRAEFPHLAAYNDGRRRAAGWYAEHLVGLDLQLPEAPAGYHHVFHQFTIQLNARDAVKTALHAEGIASAIYYPIPGHQQKMFAHQAQTHCPVAEHLAERVLSLPMFPELREEQIARIATVIRRTLHG.

At lysine 190 the chain carries N6-(pyridoxal phosphate)lysine.

The protein belongs to the DegT/DnrJ/EryC1 family. Requires pyridoxal 5'-phosphate as cofactor.

It carries out the reaction UDP-2-acetamido-3-amino-2,3-dideoxy-alpha-D-glucopyranose + 2-oxoglutarate = UDP-2-acetamido-3-dehydro-2-deoxy-alpha-D-glucopyranose + L-glutamate. It functions in the pathway bacterial outer membrane biogenesis; LPS lipid A biosynthesis. Functionally, aminotranferase involved in the synthesis of 2,3-diamino-2,3-dideoxy-D-glucopyranose (GlcN3N), which is a component of lipid A in some species. Catalyzes the amination of UDP-2-acetamido-3-dehydro-2-deoxy-alpha-D-glucopyranose (UDP-3-oxo-GlcNAc) to UDP-2-acetamido-3-amino-2,3-dideoxy-alpha-D-glucopyranose (UDP-GlcNAc3N), using L-glutamate as the amine donor. Other amine donors, such as alanine and glutamine, can substitute for glutamate, but product formation is slower. The protein is UDP-N-acetyl-3-dehydro-alpha-D-glucosamine 3-aminotranferase of Acidithiobacillus ferrooxidans (strain ATCC 23270 / DSM 14882 / CIP 104768 / NCIMB 8455) (Ferrobacillus ferrooxidans (strain ATCC 23270)).